A 225-amino-acid polypeptide reads, in one-letter code: uncharacterized protein (225 aa).

A disordered region spans residues 32–82 (PKDKKKQNDTENKKKQPKDGENDKQKEQAETQPFEWIQQKDADDKKESNTA). Composition is skewed to basic and acidic residues over residues 37 to 60 (KQNDTENKKKQPKDGENDKQKEQA) and 69 to 79 (QQKDADDKKES).

The protein belongs to the MG067/MG068/MG395 family.

This is an uncharacterized protein from Mycoplasma pneumoniae (strain ATCC 29342 / M129 / Subtype 1) (Mycoplasmoides pneumoniae).